Consider the following 571-residue polypeptide: Proline--tRNA ligase (571 aa).

This sequence belongs to the class-II aminoacyl-tRNA synthetase family. ProS type 1 subfamily. As to quaternary structure, homodimer.

It is found in the cytoplasm. The enzyme catalyses tRNA(Pro) + L-proline + ATP = L-prolyl-tRNA(Pro) + AMP + diphosphate. In terms of biological role, catalyzes the attachment of proline to tRNA(Pro) in a two-step reaction: proline is first activated by ATP to form Pro-AMP and then transferred to the acceptor end of tRNA(Pro). As ProRS can inadvertently accommodate and process non-cognate amino acids such as alanine and cysteine, to avoid such errors it has two additional distinct editing activities against alanine. One activity is designated as 'pretransfer' editing and involves the tRNA(Pro)-independent hydrolysis of activated Ala-AMP. The other activity is designated 'posttransfer' editing and involves deacylation of mischarged Ala-tRNA(Pro). The misacylated Cys-tRNA(Pro) is not edited by ProRS. The chain is Proline--tRNA ligase from Pseudomonas putida (strain W619).